Here is a 202-residue protein sequence, read N- to C-terminus: Protein G1-like4 (202 aa).

Disordered regions lie at residues 1 to 44 (MDLS…RYEA) and 158 to 202 (RARG…GAAC). Residues 12–22 (SGGGNGGGGGS) show a composition bias toward gly residues. Positions 23–36 (SSSNSSPSMGAGAP) are enriched in low complexity. One can recognise an ALOG domain in the interval 41 to 168 (RYEAQKRRDW…ARGVSYEKKK (128 aa)). The Nuclear localization signal motif lies at 166-170 (KKKRK). A compositionally biased stretch (low complexity) spans 173-186 (QQQQLQGGDSSGLH). Over residues 192-202 (PPPPPPAGAAC) the composition is skewed to pro residues.

It belongs to the plant homeotic and developmental regulators ALOG protein family.

It is found in the nucleus. Functionally, probable transcription regulator that acts as a developmental regulator by promoting cell growth in response to light. The chain is Protein G1-like4 from Oryza sativa subsp. indica (Rice).